The primary structure comprises 645 residues: Acetyl-coenzyme A synthetase (645 aa).

CoA-binding positions include 190–193 (RGGR) and Thr308. ATP contacts are provided by residues 384 to 386 (GEP), 408 to 413 (DTWWQT), Asp497, and Arg512. A CoA-binding site is contributed by Ser520. Arg523 contacts ATP. 3 residues coordinate Mg(2+): Val534, His536, and Val539. Lys606 is subject to N6-acetyllysine.

Belongs to the ATP-dependent AMP-binding enzyme family. Mg(2+) serves as cofactor. Post-translationally, acetylated. Deacetylation by the SIR2-homolog deacetylase activates the enzyme.

It carries out the reaction acetate + ATP + CoA = acetyl-CoA + AMP + diphosphate. Its function is as follows. Catalyzes the conversion of acetate into acetyl-CoA (AcCoA), an essential intermediate at the junction of anabolic and catabolic pathways. AcsA undergoes a two-step reaction. In the first half reaction, AcsA combines acetate with ATP to form acetyl-adenylate (AcAMP) intermediate. In the second half reaction, it can then transfer the acetyl group from AcAMP to the sulfhydryl group of CoA, forming the product AcCoA. The protein is Acetyl-coenzyme A synthetase of Alkalilimnicola ehrlichii (strain ATCC BAA-1101 / DSM 17681 / MLHE-1).